The primary structure comprises 295 residues: Elongation factor Ts (295 aa).

The involved in Mg(2+) ion dislocation from EF-Tu stretch occupies residues 79 to 82 (TDFV).

The protein belongs to the EF-Ts family.

The protein resides in the cytoplasm. Associates with the EF-Tu.GDP complex and induces the exchange of GDP to GTP. It remains bound to the aminoacyl-tRNA.EF-Tu.GTP complex up to the GTP hydrolysis stage on the ribosome. The polypeptide is Elongation factor Ts (Bacillus cytotoxicus (strain DSM 22905 / CIP 110041 / 391-98 / NVH 391-98)).